The following is a 218-amino-acid chain: Glutathione S-transferase Mu 5 (218 aa).

The 87-residue stretch at 2 to 88 (PMTLGYWDIR…YIARKHNLCG (87 aa)) folds into the GST N-terminal domain. Glutathione is bound by residues 7 to 8 (YW), 46 to 50 (WLNEK), 59 to 60 (NL), and 72 to 73 (QS). Residues 90 to 207 (TEEEKIRVDI…MKSSQFLRGL (118 aa)) form the GST C-terminal domain. Substrate is bound at residue Tyr116.

It belongs to the GST superfamily. Mu family. In terms of assembly, homodimer.

The protein localises to the cytoplasm. The enzyme catalyses RX + glutathione = an S-substituted glutathione + a halide anion + H(+). Conjugation of reduced glutathione to a wide number of exogenous and endogenous hydrophobic electrophiles. This is Glutathione S-transferase Mu 5 (GSTM5) from Homo sapiens (Human).